A 512-amino-acid polypeptide reads, in one-letter code: UDP-N-acetylmuramate--L-alanine ligase (512 aa).

132 to 138 serves as a coordination point for ATP; it reads GAHGKTT.

This sequence belongs to the MurCDEF family.

Its subcellular location is the cytoplasm. It carries out the reaction UDP-N-acetyl-alpha-D-muramate + L-alanine + ATP = UDP-N-acetyl-alpha-D-muramoyl-L-alanine + ADP + phosphate + H(+). The protein operates within cell wall biogenesis; peptidoglycan biosynthesis. In terms of biological role, cell wall formation. In Bifidobacterium longum (strain DJO10A), this protein is UDP-N-acetylmuramate--L-alanine ligase.